A 550-amino-acid polypeptide reads, in one-letter code: Hydroxylamine reductase (550 aa).

Positions 3, 6, 18, and 25 each coordinate [2Fe-2S] cluster. The hybrid [4Fe-2O-2S] cluster site is built by His-249, Glu-273, Cys-317, Cys-405, Cys-433, Cys-458, Glu-492, and Lys-494. Residue Cys-405 is modified to Cysteine persulfide.

This sequence belongs to the HCP family. The cofactor is [2Fe-2S] cluster. Hybrid [4Fe-2O-2S] cluster serves as cofactor.

It localises to the cytoplasm. The enzyme catalyses A + NH4(+) + H2O = hydroxylamine + AH2 + H(+). Catalyzes the reduction of hydroxylamine to form NH(3) and H(2)O. This chain is Hydroxylamine reductase, found in Escherichia coli (strain SMS-3-5 / SECEC).